Here is a 200-residue protein sequence, read N- to C-terminus: Transcription factor FapR (200 aa).

The protein belongs to the FapR family.

Transcriptional factor involved in regulation of membrane lipid biosynthesis by repressing genes involved in fatty acid and phospholipid metabolism. This Thermoanaerobacter pseudethanolicus (strain ATCC 33223 / 39E) (Clostridium thermohydrosulfuricum) protein is Transcription factor FapR.